Here is a 305-residue protein sequence, read N- to C-terminus: UDP-3-O-acyl-N-acetylglucosamine deacetylase (305 aa).

His-78, His-237, and Asp-241 together coordinate Zn(2+). His-264 serves as the catalytic Proton donor.

This sequence belongs to the LpxC family. Zn(2+) is required as a cofactor.

It catalyses the reaction a UDP-3-O-[(3R)-3-hydroxyacyl]-N-acetyl-alpha-D-glucosamine + H2O = a UDP-3-O-[(3R)-3-hydroxyacyl]-alpha-D-glucosamine + acetate. The protein operates within glycolipid biosynthesis; lipid IV(A) biosynthesis; lipid IV(A) from (3R)-3-hydroxytetradecanoyl-[acyl-carrier-protein] and UDP-N-acetyl-alpha-D-glucosamine: step 2/6. In terms of biological role, catalyzes the hydrolysis of UDP-3-O-myristoyl-N-acetylglucosamine to form UDP-3-O-myristoylglucosamine and acetate, the committed step in lipid A biosynthesis. This is UDP-3-O-acyl-N-acetylglucosamine deacetylase from Paraburkholderia xenovorans (strain LB400).